The following is an 861-amino-acid chain: Probable alpha,alpha-trehalose-phosphate synthase [UDP-forming] 10 (861 aa).

A Phosphoserine modification is found at Ser-5. Thr-32 bears the Phosphothreonine mark. The segment at 59-546 (ERKIIVANFL…ARSFSQDLER (488 aa)) is glycosyltransferase.

It in the N-terminal section; belongs to the glycosyltransferase 20 family. In the C-terminal section; belongs to the trehalose phosphatase family.

It carries out the reaction D-glucose 6-phosphate + UDP-alpha-D-glucose = alpha,alpha-trehalose 6-phosphate + UDP + H(+). This Arabidopsis thaliana (Mouse-ear cress) protein is Probable alpha,alpha-trehalose-phosphate synthase [UDP-forming] 10 (TPS10).